The chain runs to 239 residues: Phosducin-like protein 3 (239 aa).

The tract at residues 16–37 (KKGILPPKETPVEEEEDEQLHL) is disordered. A Phosducin domain is found at 28–201 (EEEEDEQLHL…LEWRLSESGA (174 aa)). Position 41 is a phosphoserine (serine 41). A thioredoxin fold region spans residues 89–239 (FGELKEISGQ…RDGEEDSDED (151 aa)). A compositionally biased stretch (polar residues) spans 217 to 227 (QLMTSIRCSAN). The segment at 217–239 (QLMTSIRCSANTHRDGEEDSDED) is disordered.

The protein belongs to the phosducin family. Interacts (via thioredoxin fold region) with kdr/vegfr2 (via juxtamembrane domain). In terms of tissue distribution, expressed in endothelial cells.

It localises to the cytoplasm. It is found in the perinuclear region. Its subcellular location is the endoplasmic reticulum. Functionally, acts as a chaperone for the angiogenic VEGF receptor KDR/VEGFR2, increasing its abundance by inhibiting its ubiquitination and degradation. Inhibits the folding activity of the chaperonin-containing T-complex (CCT) which leads to inhibition of cytoskeletal actin folding. Acts as a chaperone during heat shock alongside HSP90 and HSP40/70 chaperone complexes. Modulates the activation of caspases during apoptosis. This chain is Phosducin-like protein 3, found in Danio rerio (Zebrafish).